The primary structure comprises 284 residues: NAD kinase (284 aa).

The Proton acceptor role is filled by Asp-70. Residues 70–71, 139–140, Lys-167, Asp-169, Leu-177, 180–185, and Gln-236 each bind NAD(+); these read DG, NE, and TAYNLS.

This sequence belongs to the NAD kinase family. The cofactor is a divalent metal cation.

It is found in the cytoplasm. The enzyme catalyses NAD(+) + ATP = ADP + NADP(+) + H(+). Its function is as follows. Involved in the regulation of the intracellular balance of NAD and NADP, and is a key enzyme in the biosynthesis of NADP. Catalyzes specifically the phosphorylation on 2'-hydroxyl of the adenosine moiety of NAD to yield NADP. The polypeptide is NAD kinase (Helicobacter pylori (strain ATCC 700392 / 26695) (Campylobacter pylori)).